Here is a 142-residue protein sequence, read N- to C-terminus: Mitochondrial import receptor subunit TOM22 homolog (142 aa).

Residues 1–11 (MAAAVAAAGAG) show a composition bias toward low complexity. A disordered region spans residues 1–42 (MAAAVAAAGAGEPQSPDELLPKGDAEKPEEELEEDDDEELDE). Alanine 2 carries the post-translational modification N-acetylalanine. Residues 2-83 (AAAVAAAGAG…AQKMYRFSRA (82 aa)) lie on the Cytoplasmic side of the membrane. Residue serine 15 is modified to Phosphoserine. The segment covering 27-42 (KPEEELEEDDDEELDE) has biased composition (acidic residues). Residues 41 to 50 (DETLSERLWG) are import sequence; necessary for mitochondrion outer membrane localization and integration in the TOM complex. Threonine 43 bears the Phosphothreonine mark. Residue serine 45 is modified to Phosphoserine. A TMD; necessary for mitochondrion outer membrane localization and integration in the TOM complex region spans residues 83 to 103 (AALWIGTTSFMILVLPVVFET). Residues 84-103 (ALWIGTTSFMILVLPVVFET) traverse the membrane as a helical segment. Topologically, residues 104-142 (EKLQMEQQQQLQQRQILLGPNTGLSGGMPGALPSLPGKI) are mitochondrial intermembrane. The interval 123–142 (PNTGLSGGMPGALPSLPGKI) is C-tail signal; necessary for mitochondrion outer membrane localization and integration in the TOM complex.

The protein belongs to the Tom22 family. As to quaternary structure, forms part of the preprotein translocase complex of the outer mitochondrial membrane (TOM complex) which consists of at least 7 different proteins (TOMM5, TOMM6, TOMM7, TOMM20, TOMM22, TOMM40 and TOMM70). Interacts with TOMM40. Interacts with PPP2R2B. In terms of tissue distribution, ubiquitous.

It is found in the mitochondrion outer membrane. Its function is as follows. Central receptor component of the translocase of the outer membrane of mitochondria (TOM complex) responsible for the recognition and translocation of cytosolically synthesized mitochondrial preproteins. Together with the peripheral receptor TOM20 functions as the transit peptide receptor and facilitates the movement of preproteins into the translocation pore. Required for the translocation across the mitochondrial outer membrane of cytochrome P450 monooxygenases. The protein is Mitochondrial import receptor subunit TOM22 homolog (TOMM22) of Homo sapiens (Human).